A 289-amino-acid chain; its full sequence is Protease HtpX homolog (289 aa).

The next 2 helical transmembrane spans lie at 8–28 (LALLAALSGLLIAISYWVIGG) and 29–49 (SSGLIIGIGLAAVTNLLSWYQ). H132 contacts Zn(2+). The active site involves E133. Residue H136 participates in Zn(2+) binding. Helical transmembrane passes span 151 to 171 (VAGAISFLAQMVSYSLWFGGI) and 183 to 203 (LGVLLTVVLAPIAATIIQLAI). E208 is a binding site for Zn(2+).

This sequence belongs to the peptidase M48B family. Zn(2+) serves as cofactor.

The protein localises to the cell inner membrane. The protein is Protease HtpX homolog of Trichormus variabilis (strain ATCC 29413 / PCC 7937) (Anabaena variabilis).